We begin with the raw amino-acid sequence, 141 residues long: Hydroperoxide reductase (141 aa).

The protein belongs to the OsmC/Ohr family. In terms of assembly, homodimer.

The protein resides in the cytoplasm. Reduces organic and inorganic peroxide substrates. Protects the cell against oxidative stress. This Mycoplasma pneumoniae (strain ATCC 29342 / M129 / Subtype 1) (Mycoplasmoides pneumoniae) protein is Hydroperoxide reductase.